A 204-amino-acid polypeptide reads, in one-letter code: MFGGRRRRLPQDGTFNQTQPFDRLVGSRHSFSFDLKSATDRWPLVFLFEVVQYLFDRSFASSVVNSAFACNIFEVPFVKLKRRFSQVCFVAGQPLGYHGSWPTFALSHHILVWWCAKQVHPGVRFTSYAVLGDDVVIADQEVAKVYESALGGLGVKISYQKSLIPIQVLLSLLNASGLGNLVLKREIFPRESGVLSLMSVPSLA.

The protein localises to the mitochondrion. This is an uncharacterized protein from Arabidopsis thaliana (Mouse-ear cress).